We begin with the raw amino-acid sequence, 427 residues long: BSD domain-containing protein 1 (427 aa).

2 positions are modified to phosphoserine: Ser92 and Ser166. A BSD domain is found at 146–198; sequence WLSEFCLEEKKGEISELLVGSPSIRALYTKMVPAAVSHSEFWHRYFYKVHQLE. The tract at residues 208 to 397 is disordered; it reads KQRADQSISE…ISEDWEKDFD (190 aa). Acidic residues predominate over residues 219-229; that stretch reads PGWEEEEEELE. Residues 236–245 show a composition bias toward basic and acidic residues; that stretch reads KEAKIPKETK. The span at 268-279 shows a compositional bias: low complexity; the sequence is PAEATPSESSES. Over residues 324 to 333 the composition is skewed to pro residues; it reads GPPPPPPSKP. Over residues 347–364 the composition is skewed to basic and acidic residues; sequence PPARVETLREEVPTDLRV. At Thr353 the chain carries Phosphothreonine. Residues 368 to 387 are compositionally biased toward polar residues; the sequence is NSDSGKSTPSNNGKKGSSTD. Residues Ser384 and Ser385 each carry the phosphoserine modification. Residues 388–397 show a composition bias toward acidic residues; sequence ISEDWEKDFD. Residue Ser415 is modified to Phosphoserine.

This chain is BSD domain-containing protein 1 (Bsdc1), found in Mus musculus (Mouse).